A 596-amino-acid chain; its full sequence is Probable ATP-dependent RNA helicase DDX52 (596 aa).

Lys-15 carries the N6-acetyllysine modification. Ser-39 bears the Phosphoserine mark. Residues Leu-68–Glu-94 form a disordered region. The short motif at Gln-163–Met-191 is the Q motif element. The Helicase ATP-binding domain maps to Ile-194–Val-372. Ala-207 to Thr-214 contributes to the ATP binding site. Positions Asp-316–Asp-319 match the DEAD box motif. In terms of domain architecture, Helicase C-terminal spans Thr-383–Gln-544. Residues Ala-575–Ser-596 form a disordered region. The segment covering Asp-577–Lys-589 has biased composition (basic residues).

Belongs to the DEAD box helicase family. DDX52/ROK1 subfamily.

The protein resides in the nucleus. Its subcellular location is the nucleolus. It carries out the reaction ATP + H2O = ADP + phosphate + H(+). The polypeptide is Probable ATP-dependent RNA helicase DDX52 (DDX52) (Bos taurus (Bovine)).